We begin with the raw amino-acid sequence, 65 residues long: Large ribosomal subunit protein uL29 (65 aa).

Belongs to the universal ribosomal protein uL29 family.

This chain is Large ribosomal subunit protein uL29, found in Parabacteroides distasonis (strain ATCC 8503 / DSM 20701 / CIP 104284 / JCM 5825 / NCTC 11152).